The following is a 530-amino-acid chain: 4-alpha-glucanotransferase (530 aa).

Belongs to the disproportionating enzyme family.

The protein localises to the cytoplasm. The enzyme catalyses Transfers a segment of a (1-&gt;4)-alpha-D-glucan to a new position in an acceptor, which may be glucose or a (1-&gt;4)-alpha-D-glucan.. The chain is 4-alpha-glucanotransferase (malQ) from Chlamydia caviae (strain ATCC VR-813 / DSM 19441 / 03DC25 / GPIC) (Chlamydophila caviae).